Consider the following 200-residue polypeptide: Protein-methionine-sulfoxide reductase heme-binding subunit MsrQ (200 aa).

Transmembrane regions (helical) follow at residues 8 to 28 (ITWLKVALHLAAFLPLVWLFY), 54 to 74 (LLLATLLVTPLTRLLKQPLLI), 79 to 99 (LLGLWCFAWATLHLVSYSLLE), 116 to 136 (PYLTLGIVSWLILLALALTSF), and 153 to 173 (FIYLVAILAPIHYLWSVKILS).

This sequence belongs to the MsrQ family. As to quaternary structure, heterodimer of a catalytic subunit (MsrP) and a heme-binding subunit (MsrQ). It depends on FMN as a cofactor. The cofactor is heme b.

It localises to the cell inner membrane. Functionally, part of the MsrPQ system that repairs oxidized periplasmic proteins containing methionine sulfoxide residues (Met-O), using respiratory chain electrons. Thus protects these proteins from oxidative-stress damage caused by reactive species of oxygen and chlorine generated by the host defense mechanisms. MsrPQ is essential for the maintenance of envelope integrity under bleach stress, rescuing a wide series of structurally unrelated periplasmic proteins from methionine oxidation. MsrQ provides electrons for reduction to the reductase catalytic subunit MsrP, using the quinone pool of the respiratory chain. This chain is Protein-methionine-sulfoxide reductase heme-binding subunit MsrQ, found in Cronobacter sakazakii (strain ATCC BAA-894) (Enterobacter sakazakii).